The sequence spans 210 residues: Proteasome subunit beta (210 aa).

A propeptide spans 1–9 (MDNDKYLKG) (removed in mature form; by autocatalysis). Catalysis depends on Thr-10, which acts as the Nucleophile.

The protein belongs to the peptidase T1B family. The 20S proteasome core is composed of 14 alpha and 14 beta subunits that assemble into four stacked heptameric rings, resulting in a barrel-shaped structure. The two inner rings, each composed of seven catalytic beta subunits, are sandwiched by two outer rings, each composed of seven alpha subunits. The catalytic chamber with the active sites is on the inside of the barrel. Has a gated structure, the ends of the cylinder being occluded by the N-termini of the alpha-subunits. Is capped at one or both ends by the proteasome regulatory ATPase, PAN.

The protein resides in the cytoplasm. The catalysed reaction is Cleavage of peptide bonds with very broad specificity.. The formation of the proteasomal ATPase PAN-20S proteasome complex, via the docking of the C-termini of PAN into the intersubunit pockets in the alpha-rings, triggers opening of the gate for substrate entry. Interconversion between the open-gate and close-gate conformations leads to a dynamic regulation of the 20S proteasome proteolysis activity. Its function is as follows. Component of the proteasome core, a large protease complex with broad specificity involved in protein degradation. This is Proteasome subunit beta from Methanosarcina mazei (strain ATCC BAA-159 / DSM 3647 / Goe1 / Go1 / JCM 11833 / OCM 88) (Methanosarcina frisia).